The chain runs to 255 residues: Sushi domain-containing protein 3 (255 aa).

A disordered region spans residues 1–25 (MRWAAATLRGKARPRGRAGVTTPAP). Residues 1 to 103 (MRWAAATLRG…VPPHETFGFK (103 aa)) lie on the Extracellular side of the membrane. A glycan (N-linked (GlcNAc...) asparagine) is linked at Asn-27. Residues 30–93 (GTCAKLRLPP…WSSGSPVCKL (64 aa)) enclose the Sushi domain. Disulfide bonds link Cys-32–Cys-75 and Cys-61–Cys-91. Residues 104-124 (VAVIASIVSCAIILLMSMAFL) form a helical membrane-spanning segment. Residues 125–255 (TCCLLKCVKK…PQQPAAYALG (131 aa)) lie on the Cytoplasmic side of the membrane. Residues 173–255 (SGPSQAHDNH…PQQPAAYALG (83 aa)) form a disordered region. Over residues 179 to 191 (HDNHSFTTDHGES) the composition is skewed to basic and acidic residues.

Highly expressed in estrogen receptor-positive breast tumors.

It localises to the cell membrane. In terms of biological role, may play a role in breast tumorigenesis by promoting estrogen-dependent cell proliferation, cell-cell interactions and migration. In Homo sapiens (Human), this protein is Sushi domain-containing protein 3 (SUSD3).